Reading from the N-terminus, the 143-residue chain is Large ribosomal subunit protein uL11 (143 aa).

Belongs to the universal ribosomal protein uL11 family. Part of the ribosomal stalk of the 50S ribosomal subunit. Interacts with L10 and the large rRNA to form the base of the stalk. L10 forms an elongated spine to which L12 dimers bind in a sequential fashion forming a multimeric L10(L12)X complex. One or more lysine residues are methylated.

Functionally, forms part of the ribosomal stalk which helps the ribosome interact with GTP-bound translation factors. This is Large ribosomal subunit protein uL11 from Salinispora tropica (strain ATCC BAA-916 / DSM 44818 / JCM 13857 / NBRC 105044 / CNB-440).